A 207-amino-acid chain; its full sequence is MKKVLVFAAFIVLFSFSFLSTGLTAQAALKDGTYSVDYTVIQGDSDSASMANDYFDKPATVTVNGGKSTVSLQVNHSKWITGLWVEGNAVSVTSKNASSDTRKVSFPVSTLSNPVNAKIKVDIDDDDLNYHHEYQIKLRFDEGSAKALAGAVKSSDNNTTTPATKSDSSNKVTNPKSSDSSQMFLYGIIFVATGAGLILLKRRAIFK.

A signal peptide spans M1–A27. In terms of domain architecture, NEAT spans L29–L148. A disordered region spans residues A151–S178. A compositionally biased stretch (polar residues) spans S154 to S178. The NPKXZ sorting signal signature appears at N174–S178. Residue S177 is modified to Murein peptidoglycan amidated serine. A propeptide spans S178 to K207 (removed by sortase B).

It is found in the secreted. It localises to the cell wall. Binds both host hemin and hemoglobin with affinity in the nanomolar range and presumably directs it to membrane transporters. The chain is Hemin/hemoglobin-binding protein 1 from Listeria monocytogenes serovar 1/2a (strain ATCC BAA-679 / EGD-e).